Here is a 346-residue protein sequence, read N- to C-terminus: Dihydroorotate dehydrogenase (quinone) (346 aa).

FMN is bound by residues 62–66 and T86; that span reads AGMDK. Substrate is bound at residue K66. A substrate-binding site is contributed by 111–115; it reads NRMGF. Residues N142 and N175 each coordinate FMN. N175 is a substrate binding site. The active-site Nucleophile is S178. N180 contacts substrate. FMN is bound by residues K211 and V239. Residue 240-241 participates in substrate binding; sequence NT. FMN contacts are provided by residues G261, G289, and 310–311; that span reads YT.

The protein belongs to the dihydroorotate dehydrogenase family. Type 2 subfamily. Monomer. Requires FMN as cofactor.

The protein localises to the cell membrane. The catalysed reaction is (S)-dihydroorotate + a quinone = orotate + a quinol. It participates in pyrimidine metabolism; UMP biosynthesis via de novo pathway; orotate from (S)-dihydroorotate (quinone route): step 1/1. Catalyzes the conversion of dihydroorotate to orotate with quinone as electron acceptor. The chain is Dihydroorotate dehydrogenase (quinone) from Thermus thermophilus (strain ATCC 27634 / DSM 579 / HB8).